The following is a 272-amino-acid chain: Ribosomal RNA small subunit methyltransferase A (272 aa).

S-adenosyl-L-methionine is bound by residues N18, L20, G45, E66, D91, and N113.

The protein belongs to the class I-like SAM-binding methyltransferase superfamily. rRNA adenine N(6)-methyltransferase family. RsmA subfamily.

It is found in the cytoplasm. The catalysed reaction is adenosine(1518)/adenosine(1519) in 16S rRNA + 4 S-adenosyl-L-methionine = N(6)-dimethyladenosine(1518)/N(6)-dimethyladenosine(1519) in 16S rRNA + 4 S-adenosyl-L-homocysteine + 4 H(+). Its function is as follows. Specifically dimethylates two adjacent adenosines (A1518 and A1519) in the loop of a conserved hairpin near the 3'-end of 16S rRNA in the 30S particle. May play a critical role in biogenesis of 30S subunits. This Photorhabdus laumondii subsp. laumondii (strain DSM 15139 / CIP 105565 / TT01) (Photorhabdus luminescens subsp. laumondii) protein is Ribosomal RNA small subunit methyltransferase A.